Reading from the N-terminus, the 335-residue chain is Vitamin B12 import system permease protein BtuC (335 aa).

The next 9 helical transmembrane spans lie at 21 to 43, 63 to 82, 95 to 114, 119 to 141, 153 to 175, 195 to 212, 244 to 266, 281 to 303, and 310 to 329; these read FLAI…GENW, FPRV…AGAV, GLLG…VLMF, PFWL…LLTF, LLVG…YFST, WRHQ…IWLS, FAVG…IGLV, TLLP…LSRL, and VPIG…WLLL.

It belongs to the binding-protein-dependent transport system permease family. FecCD subfamily. As to quaternary structure, the complex is composed of two ATP-binding proteins (BtuD), two transmembrane proteins (BtuC) and a solute-binding protein (BtuF).

The protein resides in the cell inner membrane. Part of the ABC transporter complex BtuCDF involved in vitamin B12 import. Involved in the translocation of the substrate across the membrane. In Photorhabdus laumondii subsp. laumondii (strain DSM 15139 / CIP 105565 / TT01) (Photorhabdus luminescens subsp. laumondii), this protein is Vitamin B12 import system permease protein BtuC.